A 357-amino-acid polypeptide reads, in one-letter code: Cholinesterase 1 (357 aa).

Ser112 functions as the Acyl-ester intermediate in the catalytic mechanism. Cys166 and Cys179 form a disulfide bridge. Catalysis depends on charge relay system residues Glu244 and His357.

This sequence belongs to the type-B carboxylesterase/lipase family.

It carries out the reaction an acylcholine + H2O = a carboxylate + choline + H(+). The sequence is that of Cholinesterase 1 (CHE1) from Branchiostoma lanceolatum (Common lancelet).